The chain runs to 296 residues: Nucleotide-binding protein ABC3036 (296 aa).

13 to 20 provides a ligand contact to ATP; sequence GMSGAGKS. 64 to 67 provides a ligand contact to GTP; that stretch reads DLRG.

Belongs to the RapZ-like family.

Displays ATPase and GTPase activities. This chain is Nucleotide-binding protein ABC3036, found in Shouchella clausii (strain KSM-K16) (Alkalihalobacillus clausii).